Reading from the N-terminus, the 388-residue chain is MVVLHEILDGPNGDDPNNNPQEGEDNQNENPQEEVENLRNLLELPEELIERLIAHIPRCYYPYISLVSRDFRQVITSDKLFRTRSLLGFNEPVLYALIGSTQTPLSWFFLRWSNFPLELHRIRSLPTVLLGAAVVTIGYKMYVMGGTIGLNHHVSTVIVIDCRNHTWNYLPDMKRARYRAAAGEIGGRIYVIGGRKKQDADWVEVFNATTESWETVSSVCPNDASANGVFSTYVVMQGRIFALDRWGCFAYKPVQGLWQSWGVASELTRFWHPLSSFTVIGELLYTVDLTCSLGHPIVVYYPNESVWRPVMGFHLPILSQCWSKIANFGGKLVIFCTCLGTFKHILCIVIALEARQGGHIWGVVESNSRVFRDDMMLPYIRLCQTVTF.

The interval glutamate 6–glutamate 33 is disordered. Low complexity predominate over residues aspartate 9 to glutamine 21. The span at glutamate 22–glutamate 33 shows a compositional bias: acidic residues. In terms of domain architecture, F-box spans leucine 38–arginine 84. Kelch repeat units follow at residues lysine 140–glycine 187 and isoleucine 189–tyrosine 233.

The protein is Putative F-box/kelch-repeat protein At2g29820 of Arabidopsis thaliana (Mouse-ear cress).